The sequence spans 213 residues: Adenylate kinase (213 aa).

ATP is bound at residue 10–15; the sequence is GAGKGT. Residues 30–59 are NMP; the sequence is STGDMLRAAVAAGSEVGLRAKAAMESGSLV. AMP-binding positions include Thr31, Arg36, 57–59, 85–88, and Gln92; these read SLV and GFPR. Residues 126 to 163 are LID; sequence GRSSCEKCGEGYHDSFKPSAQPNVCDKCSGTLKRRADD. Arg127 provides a ligand contact to ATP. Residues Cys130, Cys133, Cys150, and Cys153 each contribute to the Zn(2+) site. AMP is bound by residues Arg160 and Arg171. Gln199 is a binding site for ATP.

This sequence belongs to the adenylate kinase family. In terms of assembly, monomer.

It localises to the cytoplasm. It carries out the reaction AMP + ATP = 2 ADP. Its pathway is purine metabolism; AMP biosynthesis via salvage pathway; AMP from ADP: step 1/1. Its function is as follows. Catalyzes the reversible transfer of the terminal phosphate group between ATP and AMP. Plays an important role in cellular energy homeostasis and in adenine nucleotide metabolism. This Magnetococcus marinus (strain ATCC BAA-1437 / JCM 17883 / MC-1) protein is Adenylate kinase.